A 197-amino-acid chain; its full sequence is Probable GTP-binding protein EngB (197 aa).

One can recognise an EngB-type G domain in the interval S25 to R197. GTP is bound by residues G33–S40, G60–Q64, D79–G82, T146–D149, and M177–I179. The Mg(2+) site is built by S40 and T62.

This sequence belongs to the TRAFAC class TrmE-Era-EngA-EngB-Septin-like GTPase superfamily. EngB GTPase family. The cofactor is Mg(2+).

In terms of biological role, necessary for normal cell division and for the maintenance of normal septation. This chain is Probable GTP-binding protein EngB, found in Wolbachia pipientis wMel.